The chain runs to 581 residues: MSASELVTELSTRFKDAVLSEQMTADRFPTVWIRPDATIDVHRFLRQEIDRPFRMLVDLWAIDETARKHRDGLPPSGITIASHLMSHERNADIRIKIALDAEYPRAKSIGSVFPNAPWYEREAYDMFGVEFEAQPHSLRILLPPGWEGHPMRKTQPGRATERPLFNMTASLFDAKEHALAADPEKFGLPTHRDGVELMILNYGPHSMATHGVFRIVLALDGEEIVAARPDIGFHHRGAEKMAERQTWHNFLPYTDRVDYLGGVMGEMPYLQAVEKACGIKVPDRALTVRIMLSEMFRIMNHLLFYGTMAQDTGAMSPVFYMFTDRERGYRVIESITGARMHPGFFRIGGLSMDLPHGWDRLVREFLDWMPSRLDDYEGMVLRNEIFRARTKGIAAYDTAMALDWGVTGPGLRATGYAWDVRKARPYAGFENFDFEIPVGHAGDCYDRTVVRVEEIRQSLKIIRQCVDNMPSGPIKADHPLTTPPPRERMLHDIETMIHHFVSTSWGPVLPPGEYTGQVETVRGLTQFALISDGEPSSYRTRIRTPSFAHLQMISAVAPGMMVADLVAYLGSIDYVMSDVDR.

An NADH dehydrogenase I subunit C region spans residues 1-172; the sequence is MSASELVTEL…PLFNMTASLF (172 aa). The tract at residues 196–581 is NADH dehydrogenase I subunit D; sequence ELMILNYGPH…IDYVMSDVDR (386 aa).

This sequence in the N-terminal section; belongs to the complex I 30 kDa subunit family. The protein in the C-terminal section; belongs to the complex I 49 kDa subunit family. NDH-1 is composed of 13 different subunits. Subunits NuoB, CD, E, F, and G constitute the peripheral sector of the complex.

It localises to the cell inner membrane. The catalysed reaction is a quinone + NADH + 5 H(+)(in) = a quinol + NAD(+) + 4 H(+)(out). Its function is as follows. NDH-1 shuttles electrons from NADH, via FMN and iron-sulfur (Fe-S) centers, to quinones in the respiratory chain. The immediate electron acceptor for the enzyme in this species is believed to be ubiquinone. Couples the redox reaction to proton translocation (for every two electrons transferred, four hydrogen ions are translocated across the cytoplasmic membrane), and thus conserves the redox energy in a proton gradient. This chain is NADH-quinone oxidoreductase subunit C/D, found in Rhodopseudomonas palustris (strain TIE-1).